We begin with the raw amino-acid sequence, 554 residues long: Probable urocanate hydratase (554 aa).

Residues 49-50, Gln-127, Glu-194, 240-241, 261-265, 271-272, and Tyr-320 contribute to the NAD(+) site; these read GG, NA, QTAAH, and YI. Residue Cys-408 is part of the active site. NAD(+) is bound at residue Gly-490.

This sequence belongs to the urocanase family. NAD(+) is required as a cofactor.

It is found in the cytoplasm. It carries out the reaction 4-imidazolone-5-propanoate = trans-urocanate + H2O. The protein operates within amino-acid degradation; L-histidine degradation into L-glutamate; N-formimidoyl-L-glutamate from L-histidine: step 2/3. Catalyzes the conversion of urocanate to 4-imidazolone-5-propionate. This Thermoplasma acidophilum (strain ATCC 25905 / DSM 1728 / JCM 9062 / NBRC 15155 / AMRC-C165) protein is Probable urocanate hydratase.